Consider the following 244-residue polypeptide: Probable transcriptional regulatory protein BT0025 (244 aa).

This sequence belongs to the TACO1 family.

The protein resides in the cytoplasm. In Borrelia turicatae (strain 91E135), this protein is Probable transcriptional regulatory protein BT0025.